The chain runs to 101 residues: Small ribosomal subunit protein bS18c (101 aa).

It belongs to the bacterial ribosomal protein bS18 family. As to quaternary structure, part of the 30S ribosomal subunit.

The protein resides in the plastid. It is found in the chloroplast. This is Small ribosomal subunit protein bS18c from Solanum bulbocastanum (Wild potato).